The chain runs to 1595 residues: Pentafunctional AROM polypeptide (1595 aa).

The segment at 1-384 (MGVPTKISIL…HEPRASTVSN (384 aa)) is 3-dehydroquinate synthase. NAD(+) contacts are provided by residues 44–46 (DTN), 81–84 (ESSK), 114–116 (GGV), and Asp-119. A 7-phospho-2-dehydro-3-deoxy-D-arabino-heptonate-binding site is contributed by Arg-130. 139–140 (TT) contacts NAD(+). 7-phospho-2-dehydro-3-deoxy-D-arabino-heptonate is bound by residues Asp-146 and Lys-152. Position 161 (Lys-161) interacts with NAD(+). Position 162 (Asn-162) interacts with 7-phospho-2-dehydro-3-deoxy-D-arabino-heptonate. Residues 179-182 (FLNT) and Asn-190 each bind NAD(+). Residue Glu-194 coordinates Zn(2+). 7-phospho-2-dehydro-3-deoxy-D-arabino-heptonate-binding positions include 194–197 (EVIK) and Lys-250. The active-site Proton acceptor; for 3-dehydroquinate synthase activity is Glu-260. 7-phospho-2-dehydro-3-deoxy-D-arabino-heptonate-binding positions include 264–268 (RNLLN) and His-271. A Zn(2+)-binding site is contributed by His-271. His-275 (proton acceptor; for 3-dehydroquinate synthase activity) is an active-site residue. His-287 and Lys-356 together coordinate 7-phospho-2-dehydro-3-deoxy-D-arabino-heptonate. His-287 provides a ligand contact to Zn(2+). The EPSP synthase stretch occupies residues 397–842 (VSPGVPKGLD…WDSLAQTFKV (446 aa)). Cys-824 (for EPSP synthase activity) is an active-site residue. The shikimate kinase stretch occupies residues 866–1057 (ASIFIIGMRG…RRKENTFFVS (192 aa)). 872–879 (GMRGAGKT) serves as a coordination point for ATP. The segment at 1058–1278 (LTLPDLGLAA…AAPGQLSARE (221 aa)) is 3-dehydroquinase. His-1181 serves as the catalytic Proton acceptor; for 3-dehydroquinate dehydratase activity. Lys-1209 serves as the catalytic Schiff-base intermediate with substrate; for 3-dehydroquinate dehydratase activity. Residues 1291–1595 (AKKFAVIGNP…MGVLPSEDIS (305 aa)) form a shikimate dehydrogenase region.

The protein in the N-terminal section; belongs to the sugar phosphate cyclases superfamily. Dehydroquinate synthase family. This sequence in the 2nd section; belongs to the EPSP synthase family. It in the 3rd section; belongs to the shikimate kinase family. In the 4th section; belongs to the type-I 3-dehydroquinase family. The protein in the C-terminal section; belongs to the shikimate dehydrogenase family. Homodimer. Zn(2+) is required as a cofactor.

Its subcellular location is the cytoplasm. It catalyses the reaction 7-phospho-2-dehydro-3-deoxy-D-arabino-heptonate = 3-dehydroquinate + phosphate. It carries out the reaction 3-dehydroquinate = 3-dehydroshikimate + H2O. The enzyme catalyses shikimate + NADP(+) = 3-dehydroshikimate + NADPH + H(+). The catalysed reaction is shikimate + ATP = 3-phosphoshikimate + ADP + H(+). It catalyses the reaction 3-phosphoshikimate + phosphoenolpyruvate = 5-O-(1-carboxyvinyl)-3-phosphoshikimate + phosphate. It participates in metabolic intermediate biosynthesis; chorismate biosynthesis; chorismate from D-erythrose 4-phosphate and phosphoenolpyruvate: step 2/7. Its pathway is metabolic intermediate biosynthesis; chorismate biosynthesis; chorismate from D-erythrose 4-phosphate and phosphoenolpyruvate: step 3/7. It functions in the pathway metabolic intermediate biosynthesis; chorismate biosynthesis; chorismate from D-erythrose 4-phosphate and phosphoenolpyruvate: step 4/7. The protein operates within metabolic intermediate biosynthesis; chorismate biosynthesis; chorismate from D-erythrose 4-phosphate and phosphoenolpyruvate: step 5/7. It participates in metabolic intermediate biosynthesis; chorismate biosynthesis; chorismate from D-erythrose 4-phosphate and phosphoenolpyruvate: step 6/7. In terms of biological role, the AROM polypeptide catalyzes 5 consecutive enzymatic reactions in prechorismate polyaromatic amino acid biosynthesis. In Ajellomyces capsulatus (strain H143) (Darling's disease fungus), this protein is Pentafunctional AROM polypeptide.